Consider the following 146-residue polypeptide: Small ribosomal subunit protein uS9 (146 aa).

Serine 3 carries the phosphoserine modification. N6-acetyllysine is present on lysine 60.

This sequence belongs to the universal ribosomal protein uS9 family. In terms of assembly, component of the small ribosomal subunit. Part of the small subunit (SSU) processome, composed of more than 70 proteins and the RNA chaperone small nucleolar RNA (snoRNA) U3.

It localises to the cytoplasm. The protein resides in the nucleus. The protein localises to the nucleolus. In terms of biological role, component of the small ribosomal subunit. The ribosome is a large ribonucleoprotein complex responsible for the synthesis of proteins in the cell. Part of the small subunit (SSU) processome, first precursor of the small eukaryotic ribosomal subunit. During the assembly of the SSU processome in the nucleolus, many ribosome biogenesis factors, an RNA chaperone and ribosomal proteins associate with the nascent pre-rRNA and work in concert to generate RNA folding, modifications, rearrangements and cleavage as well as targeted degradation of pre-ribosomal RNA by the RNA exosome. This chain is Small ribosomal subunit protein uS9 (RPS16), found in Bos taurus (Bovine).